The chain runs to 239 residues: Probable transcriptional regulatory protein BPUM_0743 (239 aa).

The protein belongs to the TACO1 family. YeeN subfamily.

It localises to the cytoplasm. In Bacillus pumilus (strain SAFR-032), this protein is Probable transcriptional regulatory protein BPUM_0743.